Consider the following 485-residue polypeptide: Probable carboxypeptidase S-like 1 (485 aa).

The signal sequence occupies residues 1 to 21; the sequence is MIFKFFFIFFLIILVIKISES. Histidine 111 is a Zn(2+) binding site. Aspartate 113 is an active-site residue. Zn(2+) is bound at residue aspartate 142. The active-site Proton acceptor is the glutamate 177. Positions 178, 204, and 431 each coordinate Zn(2+).

The protein belongs to the peptidase M20A family. The cofactor is Zn(2+).

The protein resides in the secreted. The chain is Probable carboxypeptidase S-like 1 from Dictyostelium discoideum (Social amoeba).